The primary structure comprises 2049 residues: Nonribosomal peptide synthetase tcpP (2049 aa).

An adenylation 1 region spans residues 13-395 (RHHAEAHPEA…LGRKDQLIKN (383 aa)). Positions 497–573 (ATADTKLSAL…EISNHIIEFD (77 aa)) constitute a Carrier 1 domain. S534 carries the post-translational modification O-(pantetheine 4'-phosphoryl)serine. The interval 605–913 (REITMTDVQR…ALGSKMDLLS (309 aa)) is condensation 1. Residues 1071 to 1452 (VAAWPMSVAL…GRADHQVKVR (382 aa)) are adenylation 2. One can recognise a Carrier 2 domain in the interval 1550–1625 (DHTELVVSQV…SLAASVKKHL (76 aa)). S1585 carries the post-translational modification O-(pantetheine 4'-phosphoryl)serine. The segment at 1662-2044 (MHKQASNPSS…FEQEICNLLD (383 aa)) is condensation 2.

This sequence belongs to the NRP synthetase family.

Its pathway is secondary metabolite biosynthesis. Functionally, nonribosomal peptide synthetase; part of the gene cluster that mediates the biosynthesis of an unusual class of epipolythiodioxopiperazines (ETPs) lacking the reactive thiol group important for toxicity. Firstly, L-tyrosine is prenylated by tcpD, before undergoing condensation with L-glycine in a reaction catalyzed by the NRPS tcpP leading to the diketopiperazine (DKP) backbone. Afterwards the alpha-carbon of tyrosine is oxidized by the cytochrome P450 tcpC to form a hydroxyl group. However, in contrast other ETP biosynthesis pathways studied so far, tcpC is not able to bishydroxylate the DKP at both alpha-carbon positions, but hydroxylates the alpha-carbon of the tyrosine part and the nitrogen of the glycine part. The next steps involve an alpha,beta-elimination reaction catalyzed by tcpI, a methylation by the methyltransferase tcpN the action of the four enzyme cascade tcpG/K/J/I. Due to a dysfunctional cytochrome P450 monooxygenase tcpC, the pathway leads to the biosynthesis of probable non-toxic metabolites lacking the reactive thiol group. The sequence is that of Nonribosomal peptide synthetase tcpP from Claviceps purpurea (strain 20.1) (Ergot fungus).